The chain runs to 429 residues: Protein ABERRANT PANICLE ORGANIZATION 1 (429 aa).

Over residues 1 to 11 (MMNPRRLPPLP) the composition is skewed to pro residues. The segment at 1-21 (MMNPRRLPPLPSSTSSASAAD) is disordered. The 47-residue stretch at 25-71 (PRVWRRLPQPLVDRVLACLPTPSFLRLRAACRRFYHLLFSSPFLHSH) folds into the F-box domain. The next 2 membrane-spanning stretches (helical) occupy residues 72-92 (LLLS…GHLL) and 112-132 (VAGG…LAFL). Kelch repeat units follow at residues 229–277 (MAFA…ELGG), 284–339 (RVAL…AEGG), and 350–397 (YVVL…GAAG).

In terms of assembly, part of a putative SCF (ASK/Cullin/F-box) ubiquitin ligase complex. Interacts with FL/APO2. As to expression, expressed in seedlings, roots, leaves, shoot apical meristem (SAM), developing panicles, and, at lower levels, in developing seeds.

The protein localises to the membrane. It functions in the pathway protein modification; protein ubiquitination. Component of SCF(ASK-cullin-F-box) E3 ubiquitin ligase complexes, which may mediate the ubiquitination and subsequent proteasomal degradation of target proteins. Together with FL/APO2, involved in the temporal regulation of meristem identity during both vegetative and reproductive developments in an APO2-dependent manner. Promotes spikelet formation by suppressing the precocious conversion of inflorescence meristems to spikelet meristems, probably via a positive regulation of class-C floral homeotic genes, but not of class-B genes, and through the control of cell proliferation in meristems. Mediates culm development and strength/diameter enhancement at internodes. Required for the regulation of the plastochron, floral organ identity, and floral determinacy. Controls the number of primary rachis branches (PRBs). May trigger the formation of vascular bundle systems which, consequently, promote carbohydrate translocation to panicles. Involved in ozone-induced grain yield regulation. This is Protein ABERRANT PANICLE ORGANIZATION 1 from Oryza sativa subsp. indica (Rice).